Here is a 434-residue protein sequence, read N- to C-terminus: Enolase (434 aa).

Gln165 contributes to the (2R)-2-phosphoglycerate binding site. The active-site Proton donor is the Glu207. Residues Asp244, Glu291, and Asp318 each coordinate Mg(2+). Lys343, Arg372, Ser373, and Lys394 together coordinate (2R)-2-phosphoglycerate. Lys343 functions as the Proton acceptor in the catalytic mechanism.

Belongs to the enolase family. It depends on Mg(2+) as a cofactor.

It localises to the cytoplasm. The protein localises to the secreted. Its subcellular location is the cell surface. It carries out the reaction (2R)-2-phosphoglycerate = phosphoenolpyruvate + H2O. Its pathway is carbohydrate degradation; glycolysis; pyruvate from D-glyceraldehyde 3-phosphate: step 4/5. In terms of biological role, catalyzes the reversible conversion of 2-phosphoglycerate (2-PG) into phosphoenolpyruvate (PEP). It is essential for the degradation of carbohydrates via glycolysis. In Macrococcus caseolyticus (strain JCSC5402) (Macrococcoides caseolyticum), this protein is Enolase.